Reading from the N-terminus, the 286-residue chain is 2-dehydro-3-deoxyphosphooctonate aldolase (286 aa).

It belongs to the KdsA family.

It localises to the cytoplasm. It catalyses the reaction D-arabinose 5-phosphate + phosphoenolpyruvate + H2O = 3-deoxy-alpha-D-manno-2-octulosonate-8-phosphate + phosphate. It functions in the pathway carbohydrate biosynthesis; 3-deoxy-D-manno-octulosonate biosynthesis; 3-deoxy-D-manno-octulosonate from D-ribulose 5-phosphate: step 2/3. The protein operates within bacterial outer membrane biogenesis; lipopolysaccharide biosynthesis. The polypeptide is 2-dehydro-3-deoxyphosphooctonate aldolase (kdsA) (Actinobacillus pleuropneumoniae (Haemophilus pleuropneumoniae)).